Reading from the N-terminus, the 862-residue chain is MERAESSSTEPAKAIKPIDRKSVHQICSGQVVLSLSTAVKELVENSLDAGATNIDLKLKDYGVDLIEVSDNGCGVEEENFEGLTLKHHTSKIQEFADLTQVETFGFRGEALSSLCALSDVTISTCHASAKVGTRLMFDHNGKIIQKTPYPRPRGTTVSVQQLFSTLPVRHKEFQRNIKKEYAKMVQVLHAYCIISAGIRVSCTNQLGQGKRQPVVCTGGSPSIKENIGSVFGQKQLQSLIPFVQLPPSDSVCEEYGLSCSDALHNLFYISGFISQCTHGVGRSSTDRQFFFINRRPCDPAKVCRLVNEVYHMYNRHQYPFVVLNISVDSECVDINVTPDKRQILLQEEKLLLAVLKTSLIGMFDSDVNKLNVSQQPLLDVEGNLIKMHAADLEKPMVEKQDQSPSLRTGEEKKDVSISRLREAFSLRHTTENKPHSPKTPEPRRSPLGQKRGMLSSSTSGAISDKGVLRPQKEAVSSSHGPSDPTDRAEVEKDSGHGSTSVDSEGFSIPDTGSHCSSEYAASSPGDRGSQEHVDSQEKAPKTDDSFSDVDCHSNQEDTGCKFRVLPQPTNLATPNTKRFKKEEILSSSDICQKLVNTQDMSASQVDVAVKINKKVVPLDFSMSSLAKRIKQLHHEAQQSEGEQNYRKFRAKICPGENQAAEDELRKEISKTMFAEMEIIGQFNLGFIITKLNEDIFIVDQHATDEKYNFEMLQQHTVLQGQRLIAPQTLNLTAVNEAVLIENLEIFRKNGFDFVIDENAPVTERAKLISLPTSKNWTFGPQDVDELIFMLSDSPGVMCRPSRVKQMFASRACRKSVMIGTALNTSEMKKLITHMGEMDHPWNCPHGRPTMRHIANLGVISQN.

ATP-binding residues include asparagine 45, aspartate 70, glutamate 109, alanine 110, and leucine 111. 4 stretches are compositionally biased toward basic and acidic residues: residues 391-401 (DLEKPMVEKQD), 408-444 (TGEEKKDVSISRLREAFSLRHTTENKPHSPKTPEPRR), 484-495 (PTDRAEVEKDSG), and 528-552 (GSQEHVDSQEKAPKTDDSFSDVDCH). Residues 391–552 (DLEKPMVEKQ…DDSFSDVDCH (162 aa)) form a disordered region. The residue at position 573 (threonine 573) is a Phosphothreonine. Positions 577 to 580 (KRFK) match the Nuclear localization signal motif. Residue threonine 597 is modified to Phosphothreonine.

This sequence belongs to the DNA mismatch repair MutL/HexB family. As to quaternary structure, heterodimer of PMS2 and MLH1 (MutL alpha); this interaction is required for the stability of both partners. Forms a ternary complex with MutS alpha (MSH2-MSH6) or MutS beta (MSH2-MSH3). Part of the BRCA1-associated genome surveillance complex (BASC), which contains BRCA1, MSH2, MSH6, MLH1, ATM, BLM, PMS2 and the RAD50-MRE11-NBS1 protein complex. This association could be a dynamic process changing throughout the cell cycle and within subnuclear domains. Interacts with MTMR15/FAN1.

The protein resides in the nucleus. It catalyses the reaction ATP + H2O = ADP + phosphate + H(+). Its function is as follows. Component of the post-replicative DNA mismatch repair system (MMR). Heterodimerizes with MLH1 to form MutL alpha. DNA repair is initiated by MutS alpha (MSH2-MSH6) or MutS beta (MSH2-MSH3) binding to a dsDNA mismatch, then MutL alpha is recruited to the heteroduplex. Assembly of the MutL-MutS-heteroduplex ternary complex in presence of RFC and PCNA is sufficient to activate endonuclease activity of PMS2. It introduces single-strand breaks near the mismatch and thus generates new entry points for the exonuclease EXO1 to degrade the strand containing the mismatch. DNA methylation would prevent cleavage and therefore assure that only the newly mutated DNA strand is going to be corrected. MutL alpha (MLH1-PMS2) interacts physically with the clamp loader subunits of DNA polymerase III, suggesting that it may play a role to recruit the DNA polymerase III to the site of the MMR. Also implicated in DNA damage signaling, a process which induces cell cycle arrest and can lead to apoptosis in case of major DNA damages. Possesses an ATPase activity, but in the absence of gross structural changes, ATP hydrolysis may not be necessary for proficient mismatch repair. This Homo sapiens (Human) protein is Mismatch repair endonuclease PMS2.